An 89-amino-acid chain; its full sequence is MTEAATSLKRTLVGRVVSNKMDKTVTVLIENRVKHPLYGKYVVRSKKYHAHDEANQYNEGDKVEITESRPLSRTKSWVVSRLLEAARVI.

It belongs to the universal ribosomal protein uS17 family. In terms of assembly, part of the 30S ribosomal subunit.

In terms of biological role, one of the primary rRNA binding proteins, it binds specifically to the 5'-end of 16S ribosomal RNA. This is Small ribosomal subunit protein uS17 from Ralstonia pickettii (strain 12J).